The chain runs to 1132 residues: Phycobiliprotein ApcE (1132 aa).

Position 196 (C196) interacts with (2R,3E)-phycocyanobilin. PBS-linker domains follow at residues 253-433 (DQQG…FRKV), 514-692 (LGPK…EKQE), 709-887 (PDID…KQNN), and 940-1121 (GRGQ…SSLS).

The protein belongs to the phycobilisome linker protein family. In terms of assembly, heterodimer of ApcF (a variant beta-allophycocyanin). Phycobilisomes of this organism are composed of a two cylinder core, from which six rods radiate. The core is mainly composed of allophycocyanin alpha and beta chains and of minor components. Contains one covalently linked bilin chromophore. This protein autochromophorylates.

The protein resides in the cellular thylakoid membrane. Functionally, this protein is postulated to act both as terminal energy acceptor (by its phycobilin-like domains) and as a linker polypeptide (by its repeats and arms) that stabilizes the phycobilisome core architecture. Has intrinsic bilin lyase activity. This is Phycobiliprotein ApcE (apcE) from Nostoc sp. (strain PCC 7120 / SAG 25.82 / UTEX 2576).